The primary structure comprises 182 residues: MGFKGTTVIAIKKNGKTVVAADGQVTFGHTVLKSNAIKIRKLLNGKILAGFAGSTSDAITLFEKFEEKIKAKGDGLVDIKRAAVDLAKDWRSDKILHKLEAMMLVADSKNILLISGTGDVVEPEEDVVSIGSGGNYAYSAALAYMENKKLSAFEVALRSLKIAARVCIYTNSNIVLEEIENE.

The active site involves T6. 3 residues coordinate Na(+): A164, C167, and T170.

It belongs to the peptidase T1B family. HslV subfamily. A double ring-shaped homohexamer of HslV is capped on each side by a ring-shaped HslU homohexamer. The assembly of the HslU/HslV complex is dependent on binding of ATP.

It is found in the cytoplasm. The enzyme catalyses ATP-dependent cleavage of peptide bonds with broad specificity.. Its activity is regulated as follows. Allosterically activated by HslU binding. Protease subunit of a proteasome-like degradation complex believed to be a general protein degrading machinery. This Borreliella afzelii (strain PKo) (Borrelia afzelii) protein is ATP-dependent protease subunit HslV.